The following is a 350-amino-acid chain: Methylthioribose-1-phosphate isomerase (350 aa).

Substrate-binding positions include 47 to 49, R89, and Q196; that span reads RGA. D237 functions as the Proton donor in the catalytic mechanism. 247–248 contacts substrate; sequence NK.

Belongs to the eIF-2B alpha/beta/delta subunits family. MtnA subfamily.

The enzyme catalyses 5-(methylsulfanyl)-alpha-D-ribose 1-phosphate = 5-(methylsulfanyl)-D-ribulose 1-phosphate. The protein operates within amino-acid biosynthesis; L-methionine biosynthesis via salvage pathway; L-methionine from S-methyl-5-thio-alpha-D-ribose 1-phosphate: step 1/6. Functionally, catalyzes the interconversion of methylthioribose-1-phosphate (MTR-1-P) into methylthioribulose-1-phosphate (MTRu-1-P). The chain is Methylthioribose-1-phosphate isomerase from Nitratidesulfovibrio vulgaris (strain DSM 19637 / Miyazaki F) (Desulfovibrio vulgaris).